We begin with the raw amino-acid sequence, 45 residues long: MKMSERRVGSYRKSTLRCWDWCKEQRTRAYIIWRCLIFLLRWDDY.

A required for DVL/RTFL small polypeptide activity region spans residues 13–44; that stretch reads KSTLRCWDWCKEQRTRAYIIWRCLIFLLRWDD. Residues 22-39 form a helical membrane-spanning segment; it reads CKEQRTRAYIIWRCLIFL.

Belongs to the DVL/RTFL small polypeptides family.

The protein localises to the cell membrane. In terms of biological role, small polypeptide acting as a regulatory molecule which coordinates cellular responses required for differentiation, growth and development, probably by restricting polar cell proliferation in lateral organs and coordinating socket cell recruitment and differentiation at trichome sites. This Arabidopsis thaliana (Mouse-ear cress) protein is Small polypeptide DEVIL 23.